The sequence spans 123 residues: Small ribosomal subunit protein uS12 (123 aa).

The tract at residues 1–29 is disordered; it reads MPTINQLIRKKRQSSASRKKSPALQKCPQ. Residues 8–21 show a composition bias toward basic residues; that stretch reads IRKKRQSSASRKKS. Asp89 is subject to 3-methylthioaspartic acid.

This sequence belongs to the universal ribosomal protein uS12 family. As to quaternary structure, part of the 30S ribosomal subunit. Contacts proteins S8 and S17. May interact with IF1 in the 30S initiation complex.

In terms of biological role, with S4 and S5 plays an important role in translational accuracy. Functionally, interacts with and stabilizes bases of the 16S rRNA that are involved in tRNA selection in the A site and with the mRNA backbone. Located at the interface of the 30S and 50S subunits, it traverses the body of the 30S subunit contacting proteins on the other side and probably holding the rRNA structure together. The combined cluster of proteins S8, S12 and S17 appears to hold together the shoulder and platform of the 30S subunit. In Chlamydia abortus (strain DSM 27085 / S26/3) (Chlamydophila abortus), this protein is Small ribosomal subunit protein uS12.